The primary structure comprises 201 residues: MARYTGPATRKSRRLRVDLVGGDMAFERRPYPPGQAGRARIKESEYLLQLQEKQKARFIYGVMEKQFRRYYAEANRRAGKTGENLVVLLESRLDNVVYRAGLANTRRQARQLVSHGHFTVNGKAIDVPSFRVSQYDIINVREKSQKMNWFEEAQDNLADAVVPAWLQVVPENLRILVHQLPERAQIDIPLQEQLIVEFYSK.

The S4 RNA-binding domain occupies serine 91–glutamate 151.

Belongs to the universal ribosomal protein uS4 family. In terms of assembly, part of the 30S ribosomal subunit. Contacts protein S5. The interaction surface between S4 and S5 is involved in control of translational fidelity.

In terms of biological role, one of the primary rRNA binding proteins, it binds directly to 16S rRNA where it nucleates assembly of the body of the 30S subunit. With S5 and S12 plays an important role in translational accuracy. In Corynebacterium glutamicum (strain ATCC 13032 / DSM 20300 / JCM 1318 / BCRC 11384 / CCUG 27702 / LMG 3730 / NBRC 12168 / NCIMB 10025 / NRRL B-2784 / 534), this protein is Small ribosomal subunit protein uS4.